We begin with the raw amino-acid sequence, 195 residues long: Protein GrpE (195 aa).

Residues 1 to 60 form a disordered region; it reads MAKDEEKNSQASAAPNEGEVKAKQEQTSAKEPAAKAGETEKVADLQKQVEELTKQLDDQK. The span at 37–60 shows a compositional bias: basic and acidic residues; it reads GETEKVADLQKQVEELTKQLDDQK.

This sequence belongs to the GrpE family. In terms of assembly, homodimer.

The protein localises to the cytoplasm. In terms of biological role, participates actively in the response to hyperosmotic and heat shock by preventing the aggregation of stress-denatured proteins, in association with DnaK and GrpE. It is the nucleotide exchange factor for DnaK and may function as a thermosensor. Unfolded proteins bind initially to DnaJ; upon interaction with the DnaJ-bound protein, DnaK hydrolyzes its bound ATP, resulting in the formation of a stable complex. GrpE releases ADP from DnaK; ATP binding to DnaK triggers the release of the substrate protein, thus completing the reaction cycle. Several rounds of ATP-dependent interactions between DnaJ, DnaK and GrpE are required for fully efficient folding. The sequence is that of Protein GrpE from Limosilactobacillus fermentum (strain NBRC 3956 / LMG 18251) (Lactobacillus fermentum).